Reading from the N-terminus, the 346-residue chain is Glucose-6-phosphatase 3 (346 aa).

Residues 1–24 lie on the Lumenal side of the membrane; it reads MESTLGAGIVIAEALQNQLAWLEN. Residues 25-45 form a helical membrane-spanning segment; the sequence is VWLWITFLGDPKILFLFYFPA. Residues 46 to 54 lie on the Cytoplasmic side of the membrane; sequence AYYASRRVG. The helical transmembrane segment at 55-75 threads the bilayer; it reads IAVLWISLITEWLNLIFKWFL. Residues 76–114 are Lumenal-facing; sequence FGDRPFWWVHESGYYSQAPAQVHQFPSSCETGPGSPSGH. Residue arginine 79 participates in substrate binding. Histidine 114 serves as the catalytic Proton donor. The chain crosses the membrane as a helical span at residues 115-135; that stretch reads CMITGAALWPIMTALSSQVAT. The Cytoplasmic segment spans residues 136–146; the sequence is RARSRWVRVMP. Residues 147–164 traverse the membrane as a helical segment; the sequence is SLAYCTFLLAVGLSRIFI. Arginine 161 is a binding site for substrate. Residues 165 to 169 lie on the Lumenal side of the membrane; that stretch reads LAHFP. Residue histidine 167 is the Nucleophile of the active site. Residues 170–186 traverse the membrane as a helical segment; sequence HQVLAGLITGAVLGWLM. Over 187–197 the chain is Cytoplasmic; it reads TPRVPMERELS. The chain crosses the membrane as a helical span at residues 198–218; the sequence is FYGLTALALMLGTSLIYWTLF. The Lumenal portion of the chain corresponds to 219 to 254; it reads TLGLDLSWSISLAFKWCERPEWIHVDSRPFASLSRD. Residues 255-273 traverse the membrane as a helical segment; it reads SGAALGLGIALHSPCYAQV. At 274–283 the chain is on the cytoplasmic side; sequence RRAQLGNGQK. A helical membrane pass occupies residues 284-304; it reads IACLVLAMGLLGPLDWLGHPP. Topologically, residues 305 to 307 are lumenal; that stretch reads QIS. A helical membrane pass occupies residues 308-328; it reads LFYIFNFLKYTLWPCLVLALV. At 329–346 the chain is on the cytoplasmic side; that stretch reads PWAVHMFSAQEAPPIHSS.

The protein belongs to the glucose-6-phosphatase family. Ubiquitously expressed. Highly expressed in skeletal muscle, at intermediate levels in heart, brain, placenta, kidney, colon, thymus, spleen and pancreas. Also detected in testis, prostate, ovary, liver, lung, small intestine and peripheral blood lymphocytes.

Its subcellular location is the endoplasmic reticulum membrane. It catalyses the reaction D-glucose 6-phosphate + H2O = D-glucose + phosphate. It participates in carbohydrate biosynthesis; gluconeogenesis. With respect to regulation, inhibited by vanadate. In terms of biological role, hydrolyzes glucose-6-phosphate to glucose in the endoplasmic reticulum. May form with the glucose-6-phosphate transporter (SLC37A4/G6PT) a ubiquitously expressed complex responsible for glucose production through glycogenolysis and gluconeogenesis. Probably required for normal neutrophil function. This chain is Glucose-6-phosphatase 3 (G6PC3), found in Homo sapiens (Human).